Here is a 434-residue protein sequence, read N- to C-terminus: Serine hydroxymethyltransferase (434 aa).

(6S)-5,6,7,8-tetrahydrofolate contacts are provided by residues leucine 128 and 132 to 134 (GHL). N6-(pyridoxal phosphate)lysine is present on lysine 237.

The protein belongs to the SHMT family. Homodimer. Pyridoxal 5'-phosphate is required as a cofactor.

The protein localises to the cytoplasm. It carries out the reaction (6R)-5,10-methylene-5,6,7,8-tetrahydrofolate + glycine + H2O = (6S)-5,6,7,8-tetrahydrofolate + L-serine. The protein operates within one-carbon metabolism; tetrahydrofolate interconversion. It functions in the pathway amino-acid biosynthesis; glycine biosynthesis; glycine from L-serine: step 1/1. Functionally, catalyzes the reversible interconversion of serine and glycine with tetrahydrofolate (THF) serving as the one-carbon carrier. This reaction serves as the major source of one-carbon groups required for the biosynthesis of purines, thymidylate, methionine, and other important biomolecules. Also exhibits THF-independent aldolase activity toward beta-hydroxyamino acids, producing glycine and aldehydes, via a retro-aldol mechanism. The chain is Serine hydroxymethyltransferase from Corynebacterium efficiens (strain DSM 44549 / YS-314 / AJ 12310 / JCM 11189 / NBRC 100395).